Here is a 303-residue protein sequence, read N- to C-terminus: Putative monooxygenase p33MONOX (303 aa).

5 disordered regions span residues 1-20 (MASR…LGKM), 37-56 (LEDP…IPWK), 66-96 (HLDK…KAPV), 156-233 (KLQS…LQKS), and 260-283 (RVGE…GKKQ). A Phosphothreonine modification is found at threonine 44. Residues 67–77 (LDKTEEGAASV) carry the Flavin-containing monooxygenase motif motif. The span at 76-89 (SVSSLAVTPSPATD) shows a compositional bias: polar residues. Over residues 170–183 (ASAQSTPSSTPHAS) the composition is skewed to low complexity. Threonine 175 carries the phosphothreonine modification. The residue at position 183 (serine 183) is a Phosphoserine.

The protein belongs to the P33MONOX family. In terms of assembly, interacts with NELFB, NOL12 and PRNP. Expressed in neuronal pyramidal cells of the hippocampus and in the neurons of the cortex.

It is found in the cytoplasm. Potential NADPH-dependent oxidoreductase. May be involved in the regulation of neuronal survival, differentiation and axonal outgrowth. The sequence is that of Putative monooxygenase p33MONOX (P33monox) from Mus musculus (Mouse).